We begin with the raw amino-acid sequence, 471 residues long: Alpha-galactosidase (471 aa).

The first 18 residues, 1-18, serve as a signal peptide directing secretion; the sequence is MFLLYLFTSFAAVSGVLG. A disulfide bond links Cys-42 and Cys-74. Substrate is bound by residues Asp-72 and Asp-73. Asn-82 is a glycosylation site (N-linked (GlcNAc...) asparagine). Residues Cys-121 and Cys-151 are joined by a disulfide bond. Lys-147 is a substrate binding site. The Nucleophile role is filled by Asp-149. Asn-175 is a glycosylation site (N-linked (GlcNAc...) asparagine). Arg-205 lines the substrate pocket. The active-site Proton donor is Asp-209. Cystine bridges form between Cys-221–Cys-237 and Cys-223–Cys-230. Gln-251 contacts substrate. N-linked (GlcNAc...) asparagine glycosylation is found at Asn-270, Asn-403, Asn-412, Asn-417, Asn-422, Asn-435, and Asn-454.

This sequence belongs to the glycosyl hydrolase 27 family. Homotetramer.

The protein localises to the secreted. The enzyme catalyses Hydrolysis of terminal, non-reducing alpha-D-galactose residues in alpha-D-galactosides, including galactose oligosaccharides, galactomannans and galactolipids.. This Saccharomyces pastorianus (strain ATCC 76529 / Carlsberg bottom yeast no.1 / CBS 1513 / CLIB 176 / NBRC 1167 / NCYC 396 / NRRL Y-12693) (Saaz-type lager yeast) protein is Alpha-galactosidase (MEL).